The sequence spans 126 residues: Holo-[acyl-carrier-protein] synthase (126 aa).

Residues aspartate 9 and glutamate 58 each coordinate Mg(2+).

It belongs to the P-Pant transferase superfamily. AcpS family. Requires Mg(2+) as cofactor.

The protein resides in the cytoplasm. It carries out the reaction apo-[ACP] + CoA = holo-[ACP] + adenosine 3',5'-bisphosphate + H(+). In terms of biological role, transfers the 4'-phosphopantetheine moiety from coenzyme A to a Ser of acyl-carrier-protein. The protein is Holo-[acyl-carrier-protein] synthase of Vibrio atlanticus (strain LGP32) (Vibrio splendidus (strain Mel32)).